The chain runs to 401 residues: Chaperone protein DnaJ (401 aa).

In terms of domain architecture, J spans 4–69; sequence DYYEVLGVSR…DKRRRYDQFG (66 aa). Residues 156–237 form a CR-type zinc finger; it reads GVEKTLKIKK…CYGEGIKQGD (82 aa). 8 residues coordinate Zn(2+): cysteine 169, cysteine 172, cysteine 185, cysteine 188, cysteine 211, cysteine 214, cysteine 225, and cysteine 228. CXXCXGXG motif repeat units follow at residues 169–176, 185–192, 211–218, and 225–232; these read CKECNGSG, CQTCHGSG, CPTCGGEG, and CTACYGEG. The tract at residues 377 to 401 is disordered; it reads AFSPSGSNNDKEEKSFFEKARDIFS. Positions 385–401 are enriched in basic and acidic residues; the sequence is NDKEEKSFFEKARDIFS.

Belongs to the DnaJ family. As to quaternary structure, homodimer. The cofactor is Zn(2+).

It is found in the cytoplasm. In terms of biological role, participates actively in the response to hyperosmotic and heat shock by preventing the aggregation of stress-denatured proteins and by disaggregating proteins, also in an autonomous, DnaK-independent fashion. Unfolded proteins bind initially to DnaJ; upon interaction with the DnaJ-bound protein, DnaK hydrolyzes its bound ATP, resulting in the formation of a stable complex. GrpE releases ADP from DnaK; ATP binding to DnaK triggers the release of the substrate protein, thus completing the reaction cycle. Several rounds of ATP-dependent interactions between DnaJ, DnaK and GrpE are required for fully efficient folding. Also involved, together with DnaK and GrpE, in the DNA replication of plasmids through activation of initiation proteins. This chain is Chaperone protein DnaJ, found in Chlorobium limicola (strain DSM 245 / NBRC 103803 / 6330).